The sequence spans 383 residues: Probable indole-3-pyruvate monooxygenase YUCCA10 (383 aa).

An FAD-binding site is contributed by 9-14 (GAGPAG). 177–182 (GGGNSG) is an NADP(+) binding site.

This sequence belongs to the FMO family. Requires FAD as cofactor.

The catalysed reaction is indole-3-pyruvate + NADPH + O2 + H(+) = (indol-3-yl)acetate + CO2 + NADP(+) + H2O. Its pathway is plant hormone metabolism; auxin biosynthesis. In terms of biological role, involved in auxin biosynthesis. The chain is Probable indole-3-pyruvate monooxygenase YUCCA10 (YUC10) from Arabidopsis thaliana (Mouse-ear cress).